A 401-amino-acid polypeptide reads, in one-letter code: Probable cysteine desulfurase (401 aa).

Lys-223 bears the N6-(pyridoxal phosphate)lysine mark.

This sequence belongs to the class-V pyridoxal-phosphate-dependent aminotransferase family. Csd subfamily. Requires pyridoxal 5'-phosphate as cofactor.

It catalyses the reaction (sulfur carrier)-H + L-cysteine = (sulfur carrier)-SH + L-alanine. Its function is as follows. Catalyzes the removal of elemental sulfur and selenium atoms from L-cysteine, L-cystine, L-selenocysteine, and L-selenocystine to produce L-alanine. The protein is Probable cysteine desulfurase (csdA) of Pseudomonas putida (strain ATCC 47054 / DSM 6125 / CFBP 8728 / NCIMB 11950 / KT2440).